Consider the following 268-residue polypeptide: Tryptophan synthase alpha chain (268 aa).

Active-site proton acceptor residues include Glu-49 and Asp-60.

The protein belongs to the TrpA family. In terms of assembly, tetramer of two alpha and two beta chains.

It carries out the reaction (1S,2R)-1-C-(indol-3-yl)glycerol 3-phosphate + L-serine = D-glyceraldehyde 3-phosphate + L-tryptophan + H2O. The protein operates within amino-acid biosynthesis; L-tryptophan biosynthesis; L-tryptophan from chorismate: step 5/5. In terms of biological role, the alpha subunit is responsible for the aldol cleavage of indoleglycerol phosphate to indole and glyceraldehyde 3-phosphate. This chain is Tryptophan synthase alpha chain, found in Vibrio vulnificus (strain YJ016).